The primary structure comprises 840 residues: Telomere length regulation protein TEL2 homolog (840 aa).

An N-acetylmethionine modification is found at methionine 1. Proline 374, proline 419, and proline 422 each carry hydroxyproline. Residues 443–497 form a disordered region; it reads PEPAGDCSSVSRGPSPAPVDTESPVEMPEKAVESDVPPTQPQGSDSELDSDDEFI. Phosphoserine is present on serine 457. The residue at position 486 (serine 486) is a Phosphoserine; by CK2. Serine 488, serine 492, and serine 837 each carry phosphoserine. The span at 488–497 shows a compositional bias: acidic residues; sequence SELDSDDEFI.

Belongs to the TEL2 family. In terms of assembly, component of the TTT complex composed of TELO2, TTI1 and TTI2. Interacts with ATM, ATR, MTOR, PRKDC, RUVBL2, TTI1, TTI2, SMG1 and TRRAP. Component of the mTORC1 and mTORC2 complexes. Interacts (phosphorylated form) with PIH1D1. Interaction with PIH1D1 mediates interaction of TELO2 with the R2TP complex composed of RUVBL1, RUVBL2, PIH1D1, and RPAP3. Hydroxylation by PHD3 is required for a proper interaction with ATR, and activation of the ATR/CHK1/p53 pathway following DNA damage. In terms of processing, phosphorylated at Ser-486 by CK2 following growth factor deprivation, leading to its subsequent ubiquitination by the SCF(FBXO9) complex. Phosphorylation by CK2 only takes place when TELO2 is bound to mTORC1, not mTORC2; leading to selective ubiquitination of mTORC1-associated protein. Post-translationally, ubiquitinated by the SCF(FBXO9) complex following phosphorylation by CK2 in response to growth factor deprivation, leading to its degradation by the proteasome. Only mTORC1-associated protein is ubiquitinated and degraded, leading to selective inactivation of mTORC1 to restrain cell growth and protein translation, while mTORC2 is activated due to the relief of feedback inhibition by mTORC1.

The protein localises to the cytoplasm. It localises to the membrane. Its subcellular location is the nucleus. It is found in the chromosome. The protein resides in the telomere. Functionally, regulator of the DNA damage response (DDR). Part of the TTT complex that is required to stabilize protein levels of the phosphatidylinositol 3-kinase-related protein kinase (PIKK) family proteins. The TTT complex is involved in the cellular resistance to DNA damage stresses, like ionizing radiation (IR), ultraviolet (UV) and mitomycin C (MMC). Together with the TTT complex and HSP90 may participate in the proper folding of newly synthesized PIKKs. Promotes assembly, stabilizes and maintains the activity of mTORC1 and mTORC2 complexes, which regulate cell growth and survival in response to nutrient and hormonal signals. May be involved in telomere length regulation. This is Telomere length regulation protein TEL2 homolog (Telo2) from Mus musculus (Mouse).